The following is a 61-amino-acid chain: Small ribosomal subunit protein uS14 (61 aa).

4 residues coordinate Zn(2+): Cys-24, Cys-27, Cys-40, and Cys-43.

This sequence belongs to the universal ribosomal protein uS14 family. Zinc-binding uS14 subfamily. Part of the 30S ribosomal subunit. Contacts proteins S3 and S10. It depends on Zn(2+) as a cofactor.

Binds 16S rRNA, required for the assembly of 30S particles and may also be responsible for determining the conformation of the 16S rRNA at the A site. The protein is Small ribosomal subunit protein uS14 of Heliobacterium modesticaldum (strain ATCC 51547 / Ice1).